The chain runs to 161 residues: Ribonuclease H (161 aa).

An RNase H type-1 domain is found at 5–149 (EKLAIAAATD…VDAIAVAFSK (145 aa)). Residues aspartate 14, glutamate 53, aspartate 78, and aspartate 141 each coordinate Mg(2+).

Belongs to the RNase H family. Monomer. Mg(2+) is required as a cofactor.

The protein localises to the cytoplasm. The enzyme catalyses Endonucleolytic cleavage to 5'-phosphomonoester.. Endonuclease that specifically degrades the RNA of RNA-DNA hybrids. The polypeptide is Ribonuclease H (Prochlorococcus marinus (strain NATL2A)).